We begin with the raw amino-acid sequence, 89 residues long: Small ribosomal subunit protein uS15 (89 aa).

This sequence belongs to the universal ribosomal protein uS15 family. Part of the 30S ribosomal subunit. Forms a bridge to the 50S subunit in the 70S ribosome, contacting the 23S rRNA.

Functionally, one of the primary rRNA binding proteins, it binds directly to 16S rRNA where it helps nucleate assembly of the platform of the 30S subunit by binding and bridging several RNA helices of the 16S rRNA. Forms an intersubunit bridge (bridge B4) with the 23S rRNA of the 50S subunit in the ribosome. This chain is Small ribosomal subunit protein uS15, found in Pseudomonas fluorescens (strain SBW25).